We begin with the raw amino-acid sequence, 2541 residues long: Talin-1 (2541 aa).

Positions 86-403 (RPLKIRMLDG…GYIDIILKKK (318 aa)) constitute an FERM domain. Residue threonine 167 is modified to Phosphothreonine. An interaction with LAYN region spans residues 280–435 (FQAHKNCGQM…PKKSTVLQQQ (156 aa)). Phosphoserine occurs at positions 405, 425, 446, 620, and 729. The interval 482-655 (RGHMPPLTSA…QASGELLQQI (174 aa)) is helical bundle R1. The interval 656-786 (GESDTDPHFQ…ALNELLQHVK (131 aa)) is helical bundle R2. Positions 787–911 (AHATGAGPAG…NAAAQNAIKK (125 aa)) are helical bundle R3. The interval 913–1044 (LVQRLEHAAK…RTAAQKAQEA (132 aa)) is helical bundle R4. Residue serine 1021 is modified to Phosphoserine. The tract at residues 1046 to 1206 (GPLEMDSALS…NRCVSCLPGQ (161 aa)) is helical bundle R5. Tyrosine 1116 is subject to Phosphotyrosine. Phosphothreonine is present on threonine 1142. Serine 1201 and serine 1225 each carry phosphoserine. A helical bundle R6 region spans residues 1207-1357 (RDVDNALRAV…QLITMCTQQA (151 aa)). Threonine 1263 is subject to Phosphothreonine. Serine 1323 and serine 1328 each carry phosphoserine. Positions 1327–1948 (ASPNLKSQLA…CSPSDVYTKK (622 aa)) are interaction with SYNM. The helical bundle R7A; Interaction with KANK1 stretch occupies residues 1358–1453 (PGQKECDNAL…AYLVGVSDPN (96 aa)). Residues 1359 to 1659 (GQKECDNALR…SMRDKAPGQL (301 aa)) form an interaction with VCL and F-actin region. Residues 1461–1580 (LVEPTQFARA…NLSAFASNPE (120 aa)) form a helical bundle R8 region. Lysine 1544 is subject to N6-acetyllysine. The helical bundle R7B; Interaction with KANK1 stretch occupies residues 1581 to 1653 (FSSVPAQISP…IKKLITSMRD (73 aa)). Residues 1655–1822 (APGQLECETA…TLNEAASAAG (168 aa)) are helical bundle R9. Positions 1823–1973 (VVGGMVDSIT…VLAALQAGNR (151 aa)) are helical bundle R10. Serine 1849 bears the Phosphoserine mark. Threonine 1855 is modified (phosphothreonine). At serine 1878 the chain carries Phosphoserine. The interval 1974–2140 (GTQACITAAS…TVKAVEDEAT (167 aa)) is helical bundle R11. Residue lysine 2031 is modified to N6-acetyllysine. Serine 2040 is modified (phosphoserine). At lysine 2115 the chain carries N6-acetyllysine. A helical bundle R12 region spans residues 2141-2294 (KGTRALEATT…QAAEAMKGTE (154 aa)). An I/LWEQ domain is found at 2293 to 2533 (TEWVDPEDPT…QIRQQQYKFL (241 aa)). The segment at 2300 to 2482 (DPTVIAENEL…AAQKAAAFED (183 aa)) is helical bundle R13.

Part of a complex composed of THSD1, PTK2/FAK1, TLN1 and VCL. Interacts with THSD1; this promotes interaction with PTK2/FAK1 and VCL. Interacts with NRAP and LAYN. Interacts with SYNM. Interacts with ITGB1; the interaction is prevented by competitive binding of ITGB1BP1. Binds with high affinity to VCL and with low affinity to integrins. Interacts with APBB1IP; this inhibits VCL binding. Interacts with PTK2/FAK1. Interacts with PIP5K1C. Interacts with F-actin. Interacts with SVEP1. Interacts (via R7 domain) with KANK1 or KANK2 (via KN motif); this interaction likely initiates the assembly of cortical microtubule stabilization complexes (CMSCs) at the vicinity of focal adhesions.

It is found in the cell projection. The protein resides in the ruffle membrane. It localises to the cytoplasm. Its subcellular location is the cytoskeleton. The protein localises to the cell surface. It is found in the cell junction. The protein resides in the focal adhesion. High molecular weight cytoskeletal protein concentrated at regions of cell-matrix and cell-cell contacts. Involved in connections of major cytoskeletal structures to the plasma membrane. With KANK1 co-organize the assembly of cortical microtubule stabilizing complexes (CMSCs) positioned to control microtubule-actin crosstalk at focal adhesions (FAs) rims. The chain is Talin-1 (Tln1) from Mus musculus (Mouse).